Reading from the N-terminus, the 8799-residue chain is Nesprin-1 (8799 aa).

The segment at 1-289 is actin-binding; sequence MATSRASSRS…TQYPDIHGAG (289 aa). Residues 1-8748 lie on the Cytoplasmic side of the membrane; the sequence is MATSRASSRS…GRAFLFRILR (8748 aa). Calponin-homology (CH) domains are found at residues 27–134 and 178–283; these read IVQK…LYFQ and GNAK…TQYP. 52 Spectrin repeats span residues 314-397, 398-502, 503-609, 610-703, 704-815, 816-923, 924-1024, 1025-1122, 1123-1246, 1247-1333, 1334-1442, 1443-1548, 1549-1651, 1652-1761, 1762-1877, 1878-1974, 1975-2079, 2080-2193, 2194-2301, 2302-2399, 2400-2511, 2512-2617, 2618-2729, 2730-2836, 2837-2960, 2961-3060, 3061-3169, 3170-3273, 3274-3385, 3386-3488, 3489-3591, 3592-3718, 3719-3812, 3813-3918, 3919-4026, 4027-4137, 4138-4233, 4234-4337, 4338-4449, 4450-4558, 4559-4667, 4668-4774, 4775-4880, 4881-4989, 4990-5097, 5098-5207, 5208-5316, 5317-5422, 5423-5520, 5521-5628, 5629-5745, and 5746-5851; these read RDDR…SRLF, DWHI…HLMK, MEFL…SMLE, EVIS…YARA, DEMD…QLTV, PLEE…KHVE, ANSR…HLKI, AVEK…LVDD, PDKW…SSLE, GLIS…ERRI, QVSL…MEMV, KSKW…ILGH, LSQQ…LEDL, LARW…LQSV, LAEH…SHAC, MSTL…ADAL, VALK…QGQC, CGLI…LRVS, LSIW…KDFT, AQRT…QTQA, RIQD…LQDC, VSEL…LRSC, QLAL…LESV, IDQW…VEDL, VKDH…FGQV, TQLE…QNKE, QILQ…LENL, KIQM…VSRL, DRII…LEGA, LSKW…LEKL, VRLH…RMQL, NNVV…YSDW, YGST…LEKG, LHLA…LEAK, VKDH…QRVY, RSLE…KSLK, AELW…REQD, LQRT…IQVS, VTNL…LNKA, LSEK…LEKS, LVSR…TQEA, ILAR…LEDT, TSVY…CESR, MVQS…LTEI, YSRC…LQRC, MVQW…LEDA, VDEW…GKLV, KQEL…EEGK, AMSQ…LSKL, NQAL…LQDA, AKDM…PKEA, and VVQY…PSAH. Residues 314-8666 are a coiled coil; that stretch reads RDDRLILKET…DLEKLLDMSS (8353 aa). The residue at position 377 (K377) is a Phosphoserine. S732 carries the post-translational modification Phosphoserine. The tract at residues 1288–1310 is disordered; the sequence is KKRDLQEQMEQAQQGGQAGPGQE. T2268 carries the phosphothreonine modification. Residue S5655 is modified to Phosphoserine. The disordered stretch occupies residues 5868–5894; sequence PVTEESGEEGTNSEISSPPACRSPSPV. 19 Spectrin repeats span residues 5971–6080, 6081–6187, 6377–6488, 6489–6584, 6585–6694, 6695–6798, 6799–6905, 6906–7023, 7024–7131, 7132–7240, 7241–7353, 7354–7457, 7458–7561, 7562–7674, 7675–7786, 7787–7886, 7887–8000, 8001–8109, and 8110–8221; these read LERQ…LEEK, LSDQ…SLGE, RQSI…RLQQ, ILRF…RSSL, HQNL…LEMW, SHLD…TILK, HWTR…QEKL, HQLQ…LEGL, LESW…LTSA, LGQW…SKAL, LQLW…LQAG, VVDY…LQSF, LLQH…RGII, DSQI…LAFL, LKDW…NEWA, VFSE…LKET, LVAV…IEET, WRLW…LKHF, and ISQR…VRLP. Phosphoserine is present on residues D8225 and S8227. A disordered region spans residues 8237-8287; sequence TALSDLRWQDPSADGMPSPQPSSNPSLSLPQPLRSERSGRDTPASVDSIPL. Over residues 8257-8269 the composition is skewed to low complexity; that stretch reads PSSNPSLSLPQPL. T8278 is modified (phosphothreonine). A phosphoserine mark is found at S8281, S8284, and S8308. Spectrin repeat units lie at residues 8332-8440, 8441-8550, and 8551-8668; these read SSLE…MKQN, LQKW…LQDA, and LMQC…SSSQ. T8363 is subject to Phosphothreonine. Positions 8673–8735 are disordered; it reads SWSSADELDT…SDSSRSDPRP (63 aa). Composition is skewed to polar residues over residues 8682–8698 and 8706–8718; these read TSGS…PNRQ and SLSQ…SSPK. Positions 8721 to 8735 are enriched in basic and acidic residues; sequence STRDGSDSSRSDPRP. The 60-residue stretch at 8740-8799 folds into the KASH domain; it reads RAFLFRILRAALPFQLLLLLLIGLTCLVPMSEKDYSCALSNNFARSFHPMLRYTNGPPPL. A helical; Anchor for type IV membrane protein transmembrane segment spans residues 8749–8769; the sequence is AALPFQLLLLLLIGLTCLVPM. Topologically, residues 8770-8799 are perinuclear space; sequence SEKDYSCALSNNFARSFHPMLRYTNGPPPL.

It belongs to the nesprin family. As to quaternary structure, core component of LINC complexes which are composed of inner nuclear membrane SUN domain-containing proteins coupled to outer nuclear membrane KASH domain-containing nesprins. SUN and KASH domain-containing proteins seem to bind each other promiscuously; however, differentially expression of LINC complex constituents can give rise to specific assemblies. At least SUN1/2-containing core LINC complexes are proposed to be hexameric composed of three protomers of each KASH and SUN domain-containing protein. The SUN2:SYNE1/KASH1 LINC complex is a heterohexamer; the homotrimeric cloverleave-like conformation of the SUN domain is a prerequisite for LINC complex formation in which three separate SYNE1/KASH1 peptides bind at the interface of adjacent SUN domains. Self-associates. Interacts with SYNE3. Interacts with SUN3; proposed to form a spermatogenesis-specific LINC complex with SUN3 during sperm head formation. May interact with MUSK. Interacts with SPAG4/SUN4. Interacts with EMD and LMNA in vitro. Interacts with F-actin via its N-terminal domain. Interacts with DCTN1 and DYNC1I1/2; suggesting the association with the dynein-dynactin motor complex. Interacts (via KASH domain) with TMEM258. In terms of processing, the disulfid bond with SUN1 or SUN2 is required for stability of the respective LINC complex under tensile forces. As to expression, expressed in C2F3 and CH310T1/2 cells, brain and skeletal muscle (at protein level).

It is found in the nucleus outer membrane. The protein resides in the nucleus. Its subcellular location is the nucleus envelope. The protein localises to the cytoplasm. It localises to the cytoskeleton. It is found in the myofibril. The protein resides in the sarcomere. Functionally, multi-isomeric modular protein which forms a linking network between organelles and the actin cytoskeleton to maintain the subcellular spatial organization. As a component of the LINC (LInker of Nucleoskeleton and Cytoskeleton) complex involved in the connection between the nuclear lamina and the cytoskeleton. The nucleocytoplasmic interactions established by the LINC complex play an important role in the transmission of mechanical forces across the nuclear envelope and in nuclear movement and positioning. May be involved in nucleus-centrosome attachment. During interkinetic nuclear migration (INM) at G2 phase and nuclear migration in neural progenitors its LINC complex association with SUN1/2 and probably association with cytoplasmic dynein-dynactin motor complexes functions to pull the nucleus toward the centrosome; SYNE1 and SYNE2 seem to act redundantly in cerebellum, midbrain, brain stem, and other brain regions except cerebral cortex and hippocampus. Required for centrosome migration to the apical cell surface during early ciliogenesis. May be involved in nuclear remodeling during sperm head formation in spermatogenesis; a probable SUN3:SYNE1/KASH1 LINC complex may tether spermatid nuclei to posterior cytoskeletal structures such as the manchette. This is Nesprin-1 from Mus musculus (Mouse).